We begin with the raw amino-acid sequence, 145 residues long: Major pollen allergen Ole e 1 (145 aa).

Disulfide bonds link Cys19–Cys90, Cys22–Cys131, and Cys43–Cys78. N-linked (GlcNAc...) (complex) asparagine; alternate glycosylation is present at Asn111. Residue Asn111 is glycosylated (N-linked (GlcNAc...) (high mannose) asparagine; alternate).

Belongs to the Ole e I family. In terms of processing, N-glycosylated; contains high mannose (Man(7)-GlcNAc) and partially fucosylated complex glycans (GlcNAc-Man(3)-Xyl-GlcNAc). Complex glycans may contribute to the antigenicity. Exists both in a glycosylated and in a non-glycosylated form. Ole e 1 and Ole e 1.0103 are the only non-glycosylated isoallergens. A second potential glycosylation site exists at position 50 in cv. Bella de Espana and cv. Hojiblanca. In terms of tissue distribution, expressed in tapetum and pollen grains. Not detected in petals, roots or leaves.

Its subcellular location is the endoplasmic reticulum. It localises to the secreted. Functionally, may be involved in recognition between pollen-stigma and pollen tube-style cells. The protein is Major pollen allergen Ole e 1 of Olea europaea (Common olive).